The chain runs to 167 residues: NAD(P)H-quinone oxidoreductase subunit I, chloroplastic (167 aa).

2 4Fe-4S ferredoxin-type domains span residues 55–84 (GRIHFEFDKCIACEVCVRVCPIDLPVVDWK) and 95–124 (LNYSIDFGICIFCGNCVEYCPTNCLSMTEE). Residues cysteine 64, cysteine 67, cysteine 70, cysteine 74, cysteine 104, cysteine 107, cysteine 110, and cysteine 114 each coordinate [4Fe-4S] cluster.

Belongs to the complex I 23 kDa subunit family. As to quaternary structure, NDH is composed of at least 16 different subunits, 5 of which are encoded in the nucleus. [4Fe-4S] cluster serves as cofactor.

Its subcellular location is the plastid. It is found in the chloroplast thylakoid membrane. The catalysed reaction is a plastoquinone + NADH + (n+1) H(+)(in) = a plastoquinol + NAD(+) + n H(+)(out). The enzyme catalyses a plastoquinone + NADPH + (n+1) H(+)(in) = a plastoquinol + NADP(+) + n H(+)(out). NDH shuttles electrons from NAD(P)H:plastoquinone, via FMN and iron-sulfur (Fe-S) centers, to quinones in the photosynthetic chain and possibly in a chloroplast respiratory chain. The immediate electron acceptor for the enzyme in this species is believed to be plastoquinone. Couples the redox reaction to proton translocation, and thus conserves the redox energy in a proton gradient. The chain is NAD(P)H-quinone oxidoreductase subunit I, chloroplastic from Arabis hirsuta (Hairy rock-cress).